Consider the following 375-residue polypeptide: Erythronate-4-phosphate dehydrogenase (375 aa).

Serine 45 and threonine 66 together coordinate substrate. NAD(+) contacts are provided by residues aspartate 146, threonine 175, 206–208 (ASR), and aspartate 232. Arginine 208 is a catalytic residue. The active site involves glutamate 237. Catalysis depends on histidine 254, which acts as the Proton donor. Position 257 (glycine 257) interacts with NAD(+). Position 258 (tyrosine 258) interacts with substrate.

The protein belongs to the D-isomer specific 2-hydroxyacid dehydrogenase family. PdxB subfamily. As to quaternary structure, homodimer.

Its subcellular location is the cytoplasm. It catalyses the reaction 4-phospho-D-erythronate + NAD(+) = (R)-3-hydroxy-2-oxo-4-phosphooxybutanoate + NADH + H(+). It functions in the pathway cofactor biosynthesis; pyridoxine 5'-phosphate biosynthesis; pyridoxine 5'-phosphate from D-erythrose 4-phosphate: step 2/5. Catalyzes the oxidation of erythronate-4-phosphate to 3-hydroxy-2-oxo-4-phosphonooxybutanoate. The protein is Erythronate-4-phosphate dehydrogenase of Proteus mirabilis (strain HI4320).